Consider the following 400-residue polypeptide: tRNA-specific 2-thiouridylase MnmA (400 aa).

ATP-binding positions include 19–26 (AMSGGVDS) and leucine 45. The active-site Nucleophile is cysteine 113. A disulfide bond links cysteine 113 and cysteine 210. Glycine 137 contacts ATP. The tract at residues 160 to 162 (RDQ) is interaction with tRNA. Cysteine 210 serves as the catalytic Cysteine persulfide intermediate.

Belongs to the MnmA/TRMU family.

The protein resides in the cytoplasm. It catalyses the reaction S-sulfanyl-L-cysteinyl-[protein] + uridine(34) in tRNA + AH2 + ATP = 2-thiouridine(34) in tRNA + L-cysteinyl-[protein] + A + AMP + diphosphate + H(+). Its function is as follows. Catalyzes the 2-thiolation of uridine at the wobble position (U34) of tRNA, leading to the formation of s(2)U34. The chain is tRNA-specific 2-thiouridylase MnmA from Rhodopseudomonas palustris (strain BisB18).